Reading from the N-terminus, the 229-residue chain is 2-C-methyl-D-erythritol 4-phosphate cytidylyltransferase (229 aa).

It belongs to the IspD/TarI cytidylyltransferase family. IspD subfamily.

The enzyme catalyses 2-C-methyl-D-erythritol 4-phosphate + CTP + H(+) = 4-CDP-2-C-methyl-D-erythritol + diphosphate. It functions in the pathway isoprenoid biosynthesis; isopentenyl diphosphate biosynthesis via DXP pathway; isopentenyl diphosphate from 1-deoxy-D-xylulose 5-phosphate: step 2/6. Its function is as follows. Catalyzes the formation of 4-diphosphocytidyl-2-C-methyl-D-erythritol from CTP and 2-C-methyl-D-erythritol 4-phosphate (MEP). This chain is 2-C-methyl-D-erythritol 4-phosphate cytidylyltransferase, found in Bacillus pumilus (strain SAFR-032).